A 499-amino-acid polypeptide reads, in one-letter code: NADH-quinone oxidoreductase subunit 14 (499 aa).

A run of 14 helical transmembrane segments spans residues 9–29 (ILPEVVLAGYALAALMAGAYL), 37–57 (TLLWVTVAAFLVVAAMVGLGN), 76–96 (FAKVVTLVAAAGVLAMSADYM), 104–124 (FEFPIIVALAVLGMMFMVSAG), 126–146 (LLTLYMGLELQSLALYVVAAM), 161–181 (FVLGSLSSGLLLYGASLVYGF), 196–216 (AGHLSLGVLFGLVFMLVGLSF), 235–255 (PTPVTAFFATAPKVAAMALIA), 269–289 (WSQIVAALAVMSMFLGSIAGI), 301–321 (SSIAHMGFALVGLAAGTAIGV), 324–344 (MLLYMTIYAVMNIGTFAFILS), 369–389 (ALAMLVLMFSLAGVPPTLGFF), 402–422 (GMGWLAVLGVIASVIGAFYYL), and 446–466 (YLALMVPALAMLVGAISMFGV).

Belongs to the complex I subunit 2 family. In terms of assembly, NDH-1 is composed of at least 14 different subunits, Nqo1 to Nqo14. The complex has a L-shaped structure, with the hydrophobic arm (subunits Nqo7, Nqo8, Nqo10 to Nqo14) embedded in the inner membrane and the hydrophilic peripheral arm (subunits Nqo1 to Nqo6, Nqo9) protruding into the bacterial cytoplasm. The hydrophilic domain contains all the redox centers.

It is found in the cell inner membrane. It carries out the reaction a quinone + NADH + 5 H(+)(in) = a quinol + NAD(+) + 4 H(+)(out). In terms of biological role, NDH-1 shuttles electrons from NADH, via FMN and iron-sulfur (Fe-S) centers, to quinones in the respiratory chain. The immediate electron acceptor for the enzyme in this species is believed to be ubiquinone. Couples the redox reaction to proton translocation (for every two electrons transferred, four hydrogen ions are translocated across the cytoplasmic membrane), and thus conserves the redox energy in a proton gradient. In Paracoccus denitrificans, this protein is NADH-quinone oxidoreductase subunit 14.